A 165-amino-acid polypeptide reads, in one-letter code: Protein SprT (165 aa).

The 142-residue stretch at 22–163 (LAQANLKLDR…RCVHCGEPLV (142 aa)) folds into the SprT-like domain. Position 78 (His-78) interacts with Zn(2+). Glu-79 is an active-site residue. His-82 is a binding site for Zn(2+).

It belongs to the SprT family. Zn(2+) is required as a cofactor.

It localises to the cytoplasm. This is Protein SprT from Salmonella agona (strain SL483).